The following is a 444-amino-acid chain: Probable glycine dehydrogenase (decarboxylating) subunit 1 (444 aa).

The protein belongs to the GcvP family. N-terminal subunit subfamily. The glycine cleavage system is composed of four proteins: P, T, L and H. In this organism, the P 'protein' is a heterodimer of two subunits.

It catalyses the reaction N(6)-[(R)-lipoyl]-L-lysyl-[glycine-cleavage complex H protein] + glycine + H(+) = N(6)-[(R)-S(8)-aminomethyldihydrolipoyl]-L-lysyl-[glycine-cleavage complex H protein] + CO2. In terms of biological role, the glycine cleavage system catalyzes the degradation of glycine. The P protein binds the alpha-amino group of glycine through its pyridoxal phosphate cofactor; CO(2) is released and the remaining methylamine moiety is then transferred to the lipoamide cofactor of the H protein. The sequence is that of Probable glycine dehydrogenase (decarboxylating) subunit 1 from Chlorobium luteolum (strain DSM 273 / BCRC 81028 / 2530) (Pelodictyon luteolum).